A 126-amino-acid polypeptide reads, in one-letter code: Large ribosomal subunit protein bL12 (126 aa).

The protein belongs to the bacterial ribosomal protein bL12 family. Homodimer. Part of the ribosomal stalk of the 50S ribosomal subunit. Forms a multimeric L10(L12)X complex, where L10 forms an elongated spine to which 2 to 4 L12 dimers bind in a sequential fashion. Binds GTP-bound translation factors.

In terms of biological role, forms part of the ribosomal stalk which helps the ribosome interact with GTP-bound translation factors. Is thus essential for accurate translation. This Nitrosococcus oceani (strain ATCC 19707 / BCRC 17464 / JCM 30415 / NCIMB 11848 / C-107) protein is Large ribosomal subunit protein bL12.